The chain runs to 266 residues: 5'-nucleotidase SurE (266 aa).

A divalent metal cation contacts are provided by Asp-8, Asp-9, Ser-39, and Asn-95.

This sequence belongs to the SurE nucleotidase family. The cofactor is a divalent metal cation.

Its subcellular location is the cytoplasm. It catalyses the reaction a ribonucleoside 5'-phosphate + H2O = a ribonucleoside + phosphate. Functionally, nucleotidase that shows phosphatase activity on nucleoside 5'-monophosphates. In Syntrophus aciditrophicus (strain SB), this protein is 5'-nucleotidase SurE.